We begin with the raw amino-acid sequence, 256 residues long: Imidazole glycerol phosphate synthase subunit HisF (256 aa).

Active-site residues include D12 and D131.

Belongs to the HisA/HisF family. As to quaternary structure, heterodimer of HisH and HisF.

The protein resides in the cytoplasm. The enzyme catalyses 5-[(5-phospho-1-deoxy-D-ribulos-1-ylimino)methylamino]-1-(5-phospho-beta-D-ribosyl)imidazole-4-carboxamide + L-glutamine = D-erythro-1-(imidazol-4-yl)glycerol 3-phosphate + 5-amino-1-(5-phospho-beta-D-ribosyl)imidazole-4-carboxamide + L-glutamate + H(+). It functions in the pathway amino-acid biosynthesis; L-histidine biosynthesis; L-histidine from 5-phospho-alpha-D-ribose 1-diphosphate: step 5/9. Its function is as follows. IGPS catalyzes the conversion of PRFAR and glutamine to IGP, AICAR and glutamate. The HisF subunit catalyzes the cyclization activity that produces IGP and AICAR from PRFAR using the ammonia provided by the HisH subunit. The chain is Imidazole glycerol phosphate synthase subunit HisF from Pseudomonas fluorescens (strain ATCC BAA-477 / NRRL B-23932 / Pf-5).